Here is a 147-residue protein sequence, read N- to C-terminus: ATP synthase epsilon chain (147 aa).

Belongs to the ATPase epsilon chain family. F-type ATPases have 2 components, CF(1) - the catalytic core - and CF(0) - the membrane proton channel. CF(1) has five subunits: alpha(3), beta(3), gamma(1), delta(1), epsilon(1). CF(0) has three main subunits: a, b and c.

It is found in the cell inner membrane. Functionally, produces ATP from ADP in the presence of a proton gradient across the membrane. This Protochlamydia amoebophila (strain UWE25) protein is ATP synthase epsilon chain.